The following is a 221-amino-acid chain: Thiamine-phosphate synthase (221 aa).

4-amino-2-methyl-5-(diphosphooxymethyl)pyrimidine contacts are provided by residues 49–53 and asparagine 85; that span reads QFREK. Residues aspartate 86 and aspartate 105 each contribute to the Mg(2+) site. Serine 124 is a binding site for 4-amino-2-methyl-5-(diphosphooxymethyl)pyrimidine. 151–153 contributes to the 2-[(2R,5Z)-2-carboxy-4-methylthiazol-5(2H)-ylidene]ethyl phosphate binding site; it reads TQS. Residue lysine 154 participates in 4-amino-2-methyl-5-(diphosphooxymethyl)pyrimidine binding. 2-[(2R,5Z)-2-carboxy-4-methylthiazol-5(2H)-ylidene]ethyl phosphate-binding positions include glycine 183 and 203–204; that span reads IS.

It belongs to the thiamine-phosphate synthase family. Mg(2+) serves as cofactor.

It catalyses the reaction 2-[(2R,5Z)-2-carboxy-4-methylthiazol-5(2H)-ylidene]ethyl phosphate + 4-amino-2-methyl-5-(diphosphooxymethyl)pyrimidine + 2 H(+) = thiamine phosphate + CO2 + diphosphate. The catalysed reaction is 2-(2-carboxy-4-methylthiazol-5-yl)ethyl phosphate + 4-amino-2-methyl-5-(diphosphooxymethyl)pyrimidine + 2 H(+) = thiamine phosphate + CO2 + diphosphate. It carries out the reaction 4-methyl-5-(2-phosphooxyethyl)-thiazole + 4-amino-2-methyl-5-(diphosphooxymethyl)pyrimidine + H(+) = thiamine phosphate + diphosphate. It participates in cofactor biosynthesis; thiamine diphosphate biosynthesis; thiamine phosphate from 4-amino-2-methyl-5-diphosphomethylpyrimidine and 4-methyl-5-(2-phosphoethyl)-thiazole: step 1/1. Condenses 4-methyl-5-(beta-hydroxyethyl)thiazole monophosphate (THZ-P) and 2-methyl-4-amino-5-hydroxymethyl pyrimidine pyrophosphate (HMP-PP) to form thiamine monophosphate (TMP). This chain is Thiamine-phosphate synthase, found in Histophilus somni (strain 129Pt) (Haemophilus somnus).